Here is a 193-residue protein sequence, read N- to C-terminus: Protein SPEAR3 (193 aa).

Disordered stretches follow at residues 1–50 (MGSS…GVAQ) and 85–104 (GYPSIPSSSPSFSYASSSPP). The span at 14-26 (SSSSSPTSSSSSP) shows a compositional bias: low complexity. Residues 44-52 (RGLGVAQLE) carry the SPL motif. Low complexity predominate over residues 86 to 101 (YPSIPSSSPSFSYASS). The EAR signature appears at 187–193 (LDLELRL).

As to quaternary structure, interacts with TPL and the TPR corepressors TPR1, TPR2, TPR3, TPR4, and with the TCP transcription factors TCP2, TCP3, TCP4, TCP5, TCP10, TCP13, TCP17 and TCP24. Interacts with SPL and SPEAR2. Expressed in shoot apical meristem, cotyledons and leaves. Detected at the leaf margins and in the vascular bundles at the base of the leaves.

Its subcellular location is the nucleus. Transcriptional regulator of leaf development. Acts as an adapter-like transcriptional repressor recruiting TPL/TPR corepressors to inhibit the CIN-like TCP transcription factors. The sequence is that of Protein SPEAR3 from Arabidopsis thaliana (Mouse-ear cress).